The primary structure comprises 66 residues: Type 3 secretion system chaperone YscE (66 aa).

Belongs to the YscE family. As to quaternary structure, component of the heterodimeric YscE-YscG chaperone. The YscE-YscG chaperone forms a stable ternary complex with YscF/SctF. YscE interacts with YscG, but makes very little direct contact with YscF. Homodimer in solution.

Its subcellular location is the cytoplasm. Chaperone of the type III secretion system (T3SS), also called injectisome, which is used to inject bacterial effector proteins into eukaryotic host cells. Along with YscG, prevents premature polymerization of the YscF/SctF needle protein within the cytoplasm. Is also required for stable expression of cytosolic YscF and for YscF secretion. Likely plays a role in targeting YscF present in the cytosolic YscEFG complex to the T3SS apparatus. Required for Yop secretion. The protein is Type 3 secretion system chaperone YscE of Yersinia pestis.